A 352-amino-acid polypeptide reads, in one-letter code: DNA ADP-ribosyl glycohydrolase (352 aa).

One can recognise a Macro domain in the interval 1-155; that stretch reads MITYGSGDLL…IYPPSGGSRA (155 aa). ADP-D-ribose contacts are provided by residues 8 to 9, 20 to 22, 31 to 34, and threonine 79; these read DL, TVN, and IALQ. Lysine 80 acts as the Nucleophile in catalysis. 117–121 is an ADP-D-ribose binding site; it reads GVGNG. The tract at residues 164 to 352 is interaction with DarT; it reads MTWGRAVILE…VALDRILMTA (189 aa).

This sequence belongs to the DarG ADP-ribosyl glycohydrolase family. In terms of assembly, interacts (via C-terminus) with cognate toxin DarT; this heterodimeric complex neutralizes the toxic effect of DarT by preventing ssDNA binding to DarT and consequently inactivating the toxin by direct protein-protein interactions.

The enzyme catalyses an N-(ADP-alpha-D-ribosyl)-thymidine in DNA + H2O = a thymidine in DNA + ADP-D-ribose. Functionally, antitoxin component of the hybrid type II/IV toxin-antitoxin (TA) system DarTG, which plays a crucial role in controlling bacterial growth and bacteriophage infection. De-ADP-ribosylates DNA (probably) modified on thymidine by its cognate toxin DarT, which neutralizes the activity of cognate toxin DarT. This chain is DNA ADP-ribosyl glycohydrolase, found in Mycobacterium bovis (strain BCG / Pasteur 1173P2).